The chain runs to 327 residues: Pyruvate dehydrogenase E1 component subunit beta (327 aa).

E60 contributes to the thiamine diphosphate binding site. Positions 113, 161, 162, and 164 each coordinate K(+).

In terms of assembly, heterodimer of an alpha and a beta chain. Thiamine diphosphate serves as cofactor.

It localises to the plastid. The protein resides in the chloroplast. The catalysed reaction is N(6)-[(R)-lipoyl]-L-lysyl-[protein] + pyruvate + H(+) = N(6)-[(R)-S(8)-acetyldihydrolipoyl]-L-lysyl-[protein] + CO2. The pyruvate dehydrogenase complex catalyzes the overall conversion of pyruvate to acetyl-CoA and CO(2). It contains multiple copies of three enzymatic components: pyruvate dehydrogenase (E1), dihydrolipoamide acetyltransferase (E2) and lipoamide dehydrogenase (E3). In Cyanidium caldarium (Red alga), this protein is Pyruvate dehydrogenase E1 component subunit beta (pdhB).